The following is a 489-amino-acid chain: Putative ATP-dependent RNA helicase T26G10.1 (489 aa).

The Q motif motif lies at 44 to 72 (KSFAELGVSQPLCDACQRLGWMKPSKIQQ). A Helicase ATP-binding domain is found at 75-246 (LPHALQGKDV…RASLRDPARV (172 aa)). 88-95 (AETGSGKT) lines the ATP pocket. Residues 194-197 (DEAD) carry the DEAD box motif. The region spanning 257-417 (NLKQHYIFVP…EYKCVENEVM (161 aa)) is the Helicase C-terminal domain. Residues 433-489 (EMKEMDEKKKSGKKRRQNDDFGDTEESGGRFKMGIKSMGGRGGSGGGRGGKKKKMSK) are disordered. A compositionally biased stretch (gly residues) spans 469–480 (SMGGRGGSGGGR).

It belongs to the DEAD box helicase family. DDX47/RRP3 subfamily.

It localises to the nucleus. It carries out the reaction ATP + H2O = ADP + phosphate + H(+). Probable ATP-dependent RNA helicase which may be involved in ribosome biogenesis. In Caenorhabditis elegans, this protein is Putative ATP-dependent RNA helicase T26G10.1.